The following is a 260-amino-acid chain: MAFVPPQAGYDRAITVFSPDGRLFQVNYAREAVKRGATAVGVKWKEGVVLAVEKRITSKLIEPSSYEKIFQIDDHIAAAPSGIIADARVLVDRARLEAQVYRLTYGEPVPLTVLVKKICDLKQAHTQYGGVRPFGAALLMAGVNDKPELYETDPSGAYFEWRAVAIGSGRNTAMAIFEDHYSDDLDMEGAIKLAILALAKTLEEPSPESIEVAYITMKDKRWKKMDKEEVAKYLGEILEEIKEEEVEEKEEDYSELDSNY.

This sequence belongs to the peptidase T1A family. The 20S proteasome core is composed of 14 alpha and 14 beta subunits that assemble into four stacked heptameric rings, resulting in a barrel-shaped structure. The two inner rings, each composed of seven catalytic beta subunits, are sandwiched by two outer rings, each composed of seven alpha subunits. The catalytic chamber with the active sites is on the inside of the barrel. Has a gated structure, the ends of the cylinder being occluded by the N-termini of the alpha-subunits. Is capped at one or both ends by the proteasome regulatory ATPase, PAN.

The protein resides in the cytoplasm. Its activity is regulated as follows. The formation of the proteasomal ATPase PAN-20S proteasome complex, via the docking of the C-termini of PAN into the intersubunit pockets in the alpha-rings, triggers opening of the gate for substrate entry. Interconversion between the open-gate and close-gate conformations leads to a dynamic regulation of the 20S proteasome proteolysis activity. Functionally, component of the proteasome core, a large protease complex with broad specificity involved in protein degradation. This Thermococcus onnurineus (strain NA1) protein is Proteasome subunit alpha.